The chain runs to 185 residues: Elongation factor P (185 aa).

It belongs to the elongation factor P family.

The protein localises to the cytoplasm. It functions in the pathway protein biosynthesis; polypeptide chain elongation. In terms of biological role, involved in peptide bond synthesis. Stimulates efficient translation and peptide-bond synthesis on native or reconstituted 70S ribosomes in vitro. Probably functions indirectly by altering the affinity of the ribosome for aminoacyl-tRNA, thus increasing their reactivity as acceptors for peptidyl transferase. The sequence is that of Elongation factor P from Alkaliphilus oremlandii (strain OhILAs) (Clostridium oremlandii (strain OhILAs)).